A 464-amino-acid chain; its full sequence is Cerebellar degeneration-related protein 2-like (464 aa).

3 coiled-coil regions span residues Ala-31–Thr-154, Val-201–Val-264, and Met-342–Gln-379. Positions Glu-371 to Ser-419 are disordered. Basic and acidic residues predominate over residues Val-384–Val-395. The span at Gln-399–Pro-409 shows a compositional bias: pro residues.

Belongs to the CDR2 family.

The chain is Cerebellar degeneration-related protein 2-like (cdr2l) from Danio rerio (Zebrafish).